A 179-amino-acid polypeptide reads, in one-letter code: Large ribosomal subunit protein uL6 (179 aa).

It belongs to the universal ribosomal protein uL6 family. In terms of assembly, part of the 50S ribosomal subunit.

In terms of biological role, this protein binds to the 23S rRNA, and is important in its secondary structure. It is located near the subunit interface in the base of the L7/L12 stalk, and near the tRNA binding site of the peptidyltransferase center. The polypeptide is Large ribosomal subunit protein uL6 (Acaryochloris marina (strain MBIC 11017)).